Reading from the N-terminus, the 210-residue chain is Large ribosomal subunit protein bL25 (210 aa).

This sequence belongs to the bacterial ribosomal protein bL25 family. CTC subfamily. In terms of assembly, part of the 50S ribosomal subunit; part of the 5S rRNA/L5/L18/L25 subcomplex. Contacts the 5S rRNA. Binds to the 5S rRNA independently of L5 and L18.

Functionally, this is one of the proteins that binds to the 5S RNA in the ribosome where it forms part of the central protuberance. The polypeptide is Large ribosomal subunit protein bL25 (Saccharophagus degradans (strain 2-40 / ATCC 43961 / DSM 17024)).